The following is a 100-amino-acid chain: Urease subunit gamma (100 aa).

It belongs to the urease gamma subunit family. In terms of assembly, heterotrimer of UreA (gamma), UreB (beta) and UreC (alpha) subunits. Three heterotrimers associate to form the active enzyme.

Its subcellular location is the cytoplasm. It catalyses the reaction urea + 2 H2O + H(+) = hydrogencarbonate + 2 NH4(+). Its pathway is nitrogen metabolism; urea degradation; CO(2) and NH(3) from urea (urease route): step 1/1. This Burkholderia thailandensis (strain ATCC 700388 / DSM 13276 / CCUG 48851 / CIP 106301 / E264) protein is Urease subunit gamma.